The sequence spans 209 residues: Ribosomal RNA large subunit methyltransferase E (209 aa).

Positions 63, 65, 83, 99, and 124 each coordinate S-adenosyl-L-methionine. Lys164 functions as the Proton acceptor in the catalytic mechanism.

The protein belongs to the class I-like SAM-binding methyltransferase superfamily. RNA methyltransferase RlmE family.

The protein resides in the cytoplasm. The enzyme catalyses uridine(2552) in 23S rRNA + S-adenosyl-L-methionine = 2'-O-methyluridine(2552) in 23S rRNA + S-adenosyl-L-homocysteine + H(+). Functionally, specifically methylates the uridine in position 2552 of 23S rRNA at the 2'-O position of the ribose in the fully assembled 50S ribosomal subunit. This chain is Ribosomal RNA large subunit methyltransferase E, found in Shewanella sp. (strain ANA-3).